Here is a 718-residue protein sequence, read N- to C-terminus: Ubiquitin homeostasis protein lub1 (718 aa).

WD repeat units lie at residues 12–50, 54–98, 101–139, 140–178, 180–217, 218–257, and 259–296; these read GHKQ…WTPH, NHEG…PSYY, GHES…YVLK, GHQS…KSIL, HNDC…YELH, GHTS…QCIT, and PTTS…VAPT. Positions 353 to 448 constitute a PFU domain; it reads QWSQKENEWK…QGHSLESKKE (96 aa). The region spanning 462-717 is the PUL domain; it reads TIFPVSQLLF…VDAEKQILSL (256 aa).

In terms of assembly, interacts with cdc48.

The protein localises to the nucleus. It localises to the cytoplasm. In terms of biological role, acts as a negative regulator of vacuole-dependent ubiquitin degradation. This is Ubiquitin homeostasis protein lub1 (lub1) from Schizosaccharomyces pombe (strain 972 / ATCC 24843) (Fission yeast).